The chain runs to 191 residues: Probable ribosome biogenesis protein RLP24 (191 aa).

S136 bears the Phosphoserine mark.

The protein belongs to the eukaryotic ribosomal protein eL24 family. As to quaternary structure, associated with nucleolar and cytoplasmic pre-60S particles. At the end of biogenesis it dissociates from cytoplasmic pre-60S particles and is likely to be exchanged for its ribosomal homologue, RPL24.

It localises to the nucleus. It is found in the nucleolus. In terms of biological role, involved in the biogenesis of the 60S ribosomal subunit. Ensures the docking of NOG1 to pre-60S particles. This is Probable ribosome biogenesis protein RLP24 (RpL24-like) from Drosophila melanogaster (Fruit fly).